A 73-amino-acid polypeptide reads, in one-letter code: Toxin Td5 (73 aa).

A signal peptide spans 1 to 7 (IGMVVEC). An LCN-type CS-alpha/beta domain is found at 8-70 (KDGYLVGNDG…IWNSATNRCR (63 aa)). Cystine bridges form between Cys18-Cys69, Cys22-Cys44, Cys30-Cys50, and Cys34-Cys52. The residue at position 70 (Arg70) is an Arginine amide.

The protein belongs to the long (4 C-C) scorpion toxin superfamily. Sodium channel inhibitor family. Beta subfamily. Expressed by the venom gland.

The protein resides in the secreted. Functionally, beta toxins bind voltage-independently at site-4 of sodium channels (Nav) and shift the voltage of activation toward more negative potentials thereby affecting sodium channel activation and promoting spontaneous and repetitive firing. The polypeptide is Toxin Td5 (Tityus discrepans (Venezuelan scorpion)).